Here is a 270-residue protein sequence, read N- to C-terminus: Myelin protein zero-like protein 1 (270 aa).

Residues 1–35 form the signal peptide; it reads MAEAVGAVTLIAAPARRRWLWSALAAMLGLLTARI. The Ig-like V-type domain occupies 36–151; that stretch reads SALEVHTPKE…DIVVRPGQIR (116 aa). The Extracellular portion of the chain corresponds to 36–162; the sequence is SALEVHTPKE…HVVEIDNLLV (127 aa). N-linked (GlcNAc...) asparagine glycosylation is found at Asn-50 and Asn-130. The cysteines at positions 58 and 135 are disulfide-linked. The chain crosses the membrane as a helical span at residues 163–183; sequence FLVWVVVGTVTAVVLGLTLLI. Residues 184-270 are Cytoplasmic-facing; sequence SLVLVVLYRR…SVVYADIRKD (87 aa). The disordered stretch occupies residues 201–257; that stretch reads TGCSTSERLSPVKQAPRKCPSDTEGLVKSPPSAGSHQGPVIYAQLDHSGGHHSGKIN. A phosphoserine mark is found at Ser-204, Ser-206, Ser-210, and Ser-221. The short motif at 240–245 is the ITIM motif 1 element; it reads VIYAQL. Tyr-242 carries the post-translational modification Phosphotyrosine. Position 261 is a phosphoserine (Ser-261). The short motif at 262–267 is the ITIM motif 2 element; that stretch reads VVYADI. At Tyr-264 the chain carries Phosphotyrosine.

It belongs to the myelin P0 protein family. As to quaternary structure, interacts with phosphorylated PTPN11/SHP-2. Phosphorylated on tyrosine residues upon stimulation with pervanadate and concanavalin-A (ConA). Phosphorylation at Tyr-242 and Tyr-264 is required for interaction with PTPN11/SHP-2. Dephosphorylated by PTPN11/SHP-2 (in vitro). In terms of processing, N-glycosylated.

It is found in the membrane. Cell surface receptor, which is involved in signal transduction processes. Recruits PTPN11/SHP-2 to the cell membrane and is a putative substrate of PTPN11/SHP-2. Is a major receptor for concanavalin-A (ConA) and is involved in cellular signaling induced by ConA, which probably includes Src family tyrosine-protein kinases. May be involved in regulation of integrin-mediated cell motility. This is Myelin protein zero-like protein 1 (Mpzl1) from Rattus norvegicus (Rat).